The sequence spans 336 residues: Probable allantoicase (336 aa).

The protein belongs to the allantoicase family.

The catalysed reaction is allantoate + H2O = (S)-ureidoglycolate + urea. The protein operates within nitrogen metabolism; (S)-allantoin degradation; (S)-ureidoglycolate from allantoate (aminidohydrolase route): step 1/1. In Acinetobacter baumannii (strain ATCC 17978 / DSM 105126 / CIP 53.77 / LMG 1025 / NCDC KC755 / 5377), this protein is Probable allantoicase.